A 1047-amino-acid polypeptide reads, in one-letter code: Exportin-6 (1047 aa).

Residues 32 to 98 (IDTILNNYKA…KGLLLDIYLN (67 aa)) form the Importin N-terminal domain.

This sequence belongs to the exportin family.

The protein localises to the nucleus. The protein resides in the cytoplasm. Its function is as follows. Probably mediates the nuclear export of actin and profilin-actin complexes. This Dictyostelium discoideum (Social amoeba) protein is Exportin-6 (xpo6).